A 157-amino-acid chain; its full sequence is Xanthine-guanine phosphoribosyltransferase (157 aa).

5-phospho-alpha-D-ribose 1-diphosphate contacts are provided by residues 42-43 and 93-101; these read RG and DDLVDTGNT. Asp94 provides a ligand contact to Mg(2+). Positions 97 and 140 each coordinate guanine. Residues Asp97 and Ile140 each contribute to the xanthine site. Residues 97-101 and 139-140 contribute to the GMP site; these read DTGNT and WI.

Belongs to the purine/pyrimidine phosphoribosyltransferase family. XGPT subfamily. Homotetramer. The cofactor is Mg(2+).

The protein localises to the cell inner membrane. It carries out the reaction GMP + diphosphate = guanine + 5-phospho-alpha-D-ribose 1-diphosphate. The enzyme catalyses XMP + diphosphate = xanthine + 5-phospho-alpha-D-ribose 1-diphosphate. It catalyses the reaction IMP + diphosphate = hypoxanthine + 5-phospho-alpha-D-ribose 1-diphosphate. It participates in purine metabolism; GMP biosynthesis via salvage pathway; GMP from guanine: step 1/1. It functions in the pathway purine metabolism; XMP biosynthesis via salvage pathway; XMP from xanthine: step 1/1. Purine salvage pathway enzyme that catalyzes the transfer of the ribosyl-5-phosphate group from 5-phospho-alpha-D-ribose 1-diphosphate (PRPP) to the N9 position of the 6-oxopurines guanine and xanthine to form the corresponding ribonucleotides GMP (guanosine 5'-monophosphate) and XMP (xanthosine 5'-monophosphate), with the release of PPi. To a lesser extent, also acts on hypoxanthine. The sequence is that of Xanthine-guanine phosphoribosyltransferase from Actinobacillus pleuropneumoniae serotype 5b (strain L20).